A 470-amino-acid chain; its full sequence is Uronate isomerase (470 aa).

It belongs to the metallo-dependent hydrolases superfamily. Uronate isomerase family.

It catalyses the reaction D-glucuronate = D-fructuronate. It carries out the reaction aldehydo-D-galacturonate = keto-D-tagaturonate. It participates in carbohydrate metabolism; pentose and glucuronate interconversion. The chain is Uronate isomerase from Cronobacter sakazakii (strain ATCC BAA-894) (Enterobacter sakazakii).